We begin with the raw amino-acid sequence, 348 residues long: MPGWRLLTQVGAQVLGRLGDGLGAALGPGNRTHIWLFVRGLHGKSGTWWDEHLSEENVPFIKQLVSDEDKAQLASKLCPLKDEPWPIHPWEPGSFRVGLIALKLGMMPLWTKDGQKHVVTLLQVQDCHVLKYTSKENCNGKMATLSVGGKTVSRFRKATSILEFYRELGLPPKQTVKIFNITDNAAIKPGTPLYAAHFRPGQYVDVTAKTIGKGFQGVMKRWGFKGQPATHGQTKTHRRPGAVATGDIGRVWPGTKMPGKMGNIYRTEYGLKVWRINTKHNIIYVNGSVPGHKNCLVKVKDSKLPAYKDLGKNLPFPTYFPDGDEEELPEDLYDENVCQPGAPSITFA.

Residues M1–G40 constitute a mitochondrion transit peptide.

It belongs to the universal ribosomal protein uL3 family. Component of the mitochondrial large ribosomal subunit (mt-LSU). Mature mammalian 55S mitochondrial ribosomes consist of a small (28S) and a large (39S) subunit. The 28S small subunit contains a 12S ribosomal RNA (12S mt-rRNA) and 30 different proteins. The 39S large subunit contains a 16S rRNA (16S mt-rRNA), a copy of mitochondrial valine transfer RNA (mt-tRNA(Val)), which plays an integral structural role, and 52 different proteins.

The protein resides in the mitochondrion. The sequence is that of Large ribosomal subunit protein uL3m (MRPL3) from Homo sapiens (Human).